We begin with the raw amino-acid sequence, 390 residues long: F-box/kelch-repeat protein At4g39753 (390 aa).

The span at 1–16 (MVTFWAETAASAATTS) shows a compositional bias: low complexity. Residues 1–33 (MVTFWAETAASAATTSKGEPPSKKRKTNPSPPP) are disordered. The F-box domain occupies 32–79 (PPSLLSLPDVLILNCLSRIPKSYYPKLSIVSKTFRDLIISIDLNHARF). 4 Kelch repeats span residues 139 to 192 (PLLV…VFDR), 193 to 243 (KIYV…MIQG), 245 to 286 (FYVR…WYSC), and 288 to 321 (PNSFLWFDNEIKNWRLIKGLSSLNHSCRSGLIET).

This is F-box/kelch-repeat protein At4g39753 from Arabidopsis thaliana (Mouse-ear cress).